The primary structure comprises 98 residues: Co-chaperonin GroES (98 aa).

Belongs to the GroES chaperonin family. As to quaternary structure, heptamer of 7 subunits arranged in a ring. Interacts with the chaperonin GroEL.

It localises to the cytoplasm. In terms of biological role, together with the chaperonin GroEL, plays an essential role in assisting protein folding. The GroEL-GroES system forms a nano-cage that allows encapsulation of the non-native substrate proteins and provides a physical environment optimized to promote and accelerate protein folding. GroES binds to the apical surface of the GroEL ring, thereby capping the opening of the GroEL channel. The protein is Co-chaperonin GroES of Micrococcus luteus (strain ATCC 4698 / DSM 20030 / JCM 1464 / CCM 169 / CCUG 5858 / IAM 1056 / NBRC 3333 / NCIMB 9278 / NCTC 2665 / VKM Ac-2230) (Micrococcus lysodeikticus).